Here is a 348-residue protein sequence, read N- to C-terminus: MTAPSQVLKIRRPDDWHLHLRDGDMLKTVVPYTSEIYGRAIVMPNLAPPVTTVEAAVAYRQRILDAVPAGHDFTPLMTCYLTDSLDPNELERGFNEGVFTAAKLYPANATTNSSHGVTSVDAIMPVLERMEKIGMPLLVHGEVTHADIDIFDREARFIESVMEPLRQRLTALKVVFEHITTKDAADYVRDGNERLAATITPQHLMFNRNHMLVGGVRPHLYCLPILKRNIHQQALRELVASGFNRVFLGTDSAPHARHRKESSCGCAGCFNAPTALGSYATVFEEMNALQHFEAFCSVNGPQFYGLPVNDTFIELVREEQQVAESIALTDDTLVPFLAGETVRWSVKQ.

Zn(2+)-binding residues include His17 and His19. Substrate contacts are provided by residues His19–Arg21 and Asn45. Residues Lys103, His140, and His178 each contribute to the Zn(2+) site. Lys103 is subject to N6-carboxylysine. Residue His140 participates in substrate binding. Residue Leu223 participates in substrate binding. Position 251 (Asp251) interacts with Zn(2+). Residue Asp251 is part of the active site. Substrate contacts are provided by His255 and Ala267.

It belongs to the metallo-dependent hydrolases superfamily. DHOase family. Class II DHOase subfamily. As to quaternary structure, homodimer. Zn(2+) serves as cofactor.

The enzyme catalyses (S)-dihydroorotate + H2O = N-carbamoyl-L-aspartate + H(+). The protein operates within pyrimidine metabolism; UMP biosynthesis via de novo pathway; (S)-dihydroorotate from bicarbonate: step 3/3. Functionally, catalyzes the reversible cyclization of carbamoyl aspartate to dihydroorotate. The sequence is that of Dihydroorotase from Escherichia coli (strain SMS-3-5 / SECEC).